The chain runs to 186 residues: Catechol O-methyltransferase (186 aa).

S-adenosyl-L-methionine contacts are provided by residues V7, E29, S37, E55, L56, 82-85, S84, and D106; that span reads GASQ. D106 is a binding site for Mg(2+). Residue K109 coordinates substrate. Residues D134 and N135 each coordinate Mg(2+). Residues N135 and E164 each contribute to the substrate site. The residue at position 182 (S182) is a Phosphoserine.

It belongs to the class I-like SAM-binding methyltransferase superfamily. Cation-dependent O-methyltransferase family. Mg(2+) serves as cofactor.

It localises to the cytoplasm. It is found in the cell membrane. The catalysed reaction is a catechol + S-adenosyl-L-methionine = a guaiacol + S-adenosyl-L-homocysteine + H(+). The enzyme catalyses 2-hydroxyestrone + S-adenosyl-L-methionine = 2-hydroxy-3-methoxy-estrone + S-adenosyl-L-homocysteine + H(+). It catalyses the reaction 4-hydroxyestrone + S-adenosyl-L-methionine = 4-methoxyestrone + S-adenosyl-L-homocysteine + H(+). It carries out the reaction 2-hydroxyestrone + S-adenosyl-L-methionine = 2-methoxyestrone + S-adenosyl-L-homocysteine + H(+). The catalysed reaction is 4-hydroxy-17beta-estradiol + S-adenosyl-L-methionine = 4-methoxy-17beta-estradiol + S-adenosyl-L-homocysteine + H(+). The enzyme catalyses 2-hydroxy-17beta-estradiol + S-adenosyl-L-methionine = 2-hydroxy-3-methoxy-17beta-estradiol + S-adenosyl-L-homocysteine + H(+). It catalyses the reaction 2-hydroxy-17beta-estradiol + S-adenosyl-L-methionine = 2-methoxy-17beta-estradiol + S-adenosyl-L-homocysteine + H(+). Its function is as follows. Catalyzes the O-methylation, and thereby the inactivation, of catecholamine neurotransmitters and catechol hormones. Also shortens the biological half-lives of certain neuroactive drugs, like L-DOPA, alpha-methyl DOPA and isoproterenol. The chain is Catechol O-methyltransferase (COMT) from Sus scrofa (Pig).